A 225-amino-acid chain; its full sequence is C-type lectin domain-containing protein 91 (225 aa).

The N-terminal stretch at 1–21 (MRSTYILIIVPLIIIGGGVVA) is a signal peptide. Positions 85 to 215 (YSDSCYFIET…CTMAFKSICE (131 aa)) constitute a C-type lectin domain. Cystine bridges form between Cys-106/Cys-214 and Cys-185/Cys-206. A glycan (N-linked (GlcNAc...) asparagine) is linked at Asn-217.

The protein localises to the secreted. In Caenorhabditis elegans, this protein is C-type lectin domain-containing protein 91 (clec-91).